The primary structure comprises 58 residues: Ribosome biogenesis protein Nop10 (58 aa).

The protein belongs to the NOP10 family.

Its function is as follows. Involved in ribosome biogenesis; more specifically in 18S rRNA pseudouridylation and in cleavage of pre-rRNA. The chain is Ribosome biogenesis protein Nop10 from Thermococcus onnurineus (strain NA1).